A 205-amino-acid chain; its full sequence is Probable GTP-binding protein EngB (205 aa).

An EngB-type G domain is found at 29–203 (QGAEIAFIGR…KAVLSQWFRS (175 aa)). GTP-binding positions include 37–44 (GRSNAGKS), 64–68 (GRTQM), 82–85 (DLPG), 149–152 (TKSD), and 182–184 (FSS). Ser-44 and Thr-66 together coordinate Mg(2+).

Belongs to the TRAFAC class TrmE-Era-EngA-EngB-Septin-like GTPase superfamily. EngB GTPase family. The cofactor is Mg(2+).

Necessary for normal cell division and for the maintenance of normal septation. The sequence is that of Probable GTP-binding protein EngB from Coxiella burnetii (strain RSA 493 / Nine Mile phase I).